The primary structure comprises 328 residues: 2,3-diketo-L-gulonate-binding periplasmic protein YiaO (328 aa).

The first 24 residues, 1 to 24, serve as a signal peptide directing secretion; the sequence is MKLRSVTYALFIAGLAAFSTSSLA.

As to quaternary structure, the complex comprises the extracytoplasmic solute receptor protein YiaO, and the two transmembrane proteins YiaM and YiaN.

The protein localises to the periplasm. In terms of biological role, part of the tripartite ATP-independent periplasmic (TRAP) transport system YiaMNO involved in the uptake of 2,3-diketo-L-gulonate. This protein specifically binds 2,3-diketo-L-gulonate. Is not able to bind either L-ascorbate or dehydroascorbate. The chain is 2,3-diketo-L-gulonate-binding periplasmic protein YiaO (yiaO) from Escherichia coli (strain K12).